The sequence spans 274 residues: Acetyl-coenzyme A carboxylase carboxyl transferase subunit alpha (274 aa).

The 249-residue stretch at 2 to 250 (NKEFIKSIVV…KKELMNAMNE (249 aa)) folds into the CoA carboxyltransferase C-terminal domain.

This sequence belongs to the AccA family. As to quaternary structure, acetyl-CoA carboxylase is a heterohexamer composed of biotin carboxyl carrier protein (AccB), biotin carboxylase (AccC) and two subunits each of ACCase subunit alpha (AccA) and ACCase subunit beta (AccD).

Its subcellular location is the cytoplasm. The enzyme catalyses N(6)-carboxybiotinyl-L-lysyl-[protein] + acetyl-CoA = N(6)-biotinyl-L-lysyl-[protein] + malonyl-CoA. It functions in the pathway lipid metabolism; malonyl-CoA biosynthesis; malonyl-CoA from acetyl-CoA: step 1/1. Component of the acetyl coenzyme A carboxylase (ACC) complex. First, biotin carboxylase catalyzes the carboxylation of biotin on its carrier protein (BCCP) and then the CO(2) group is transferred by the carboxyltransferase to acetyl-CoA to form malonyl-CoA. The sequence is that of Acetyl-coenzyme A carboxylase carboxyl transferase subunit alpha from Clostridium botulinum (strain Eklund 17B / Type B).